The primary structure comprises 426 residues: Endoglucanase Z (426 aa).

The first 43 residues, 1 to 43, serve as a signal peptide directing secretion; that stretch reads MPLSYLDKNPVIDSKKHALRKKLFLSCAYFGLSLACLSSNAWA. A catalytic region spans residues 44 to 332; it reads SVEPLSVNGN…VKSIIQSWPY (289 aa). E176 acts as the Proton donor in catalysis. E263 serves as the catalytic Nucleophile. Residues 333-366 are linker; the sequence is KAGSAASATTDPSTDTTTDTTVDEPTTTDTPATA. The interval 336–367 is disordered; it reads SAASATTDPSTDTTTDTTVDEPTTTDTPATAD. A cellulose-binding region spans residues 367-426; sequence DCANANVYPNWVSKDWAGGQPTHNEAGQSIVYKGNLYTANWYTASVPGSDSSWTQVGSCN. C368 and C425 are joined by a disulfide.

Belongs to the glycosyl hydrolase 5 (cellulase A) family.

The protein resides in the secreted. The catalysed reaction is Endohydrolysis of (1-&gt;4)-beta-D-glucosidic linkages in cellulose, lichenin and cereal beta-D-glucans.. Functionally, represents 97% of the global cellulase activity. The polypeptide is Endoglucanase Z (celZ) (Dickeya dadantii (strain 3937) (Erwinia chrysanthemi (strain 3937))).